We begin with the raw amino-acid sequence, 1921 residues long: Mediator of RNA polymerase II transcription subunit 13 (1921 aa).

Residues Lys220 and Lys226 each participate in a glycyl lysine isopeptide (Lys-Gly) (interchain with G-Cter in ubiquitin) cross-link. Disordered stretches follow at residues 400–434 (YEKNGYNSSGSSRNSSISSTSSASSGSGWRMTSRT), 702–724 (TQVEGRKGRHDKLPTVISDNSST), and 1485–1528 (SPTF…GDVS). Residues 407 to 427 (SSGSSRNSSISSTSSASSGSG) show a composition bias toward low complexity. Polar residues-rich tracts occupy residues 1486-1496 (PTFTSLGSESS) and 1515-1527 (EGITSGSSSQGDV).

It belongs to the Mediator complex subunit 13 family. Component of the Mediator complex. Interacts with CYCC1-2 (CDK8 homolog). As to expression, ubiquitous. Highest expression in the shoot apex.

Its subcellular location is the nucleus. Component of the Mediator complex, a coactivator involved in the regulated transcription of nearly all RNA polymerase II-dependent genes. Mediator functions as a bridge to convey information from gene-specific regulatory proteins to the basal RNA polymerase II transcription machinery. The Mediator complex, having a compact conformation in its free form, is recruited to promoters by direct interactions with regulatory proteins and serves for the assembly of a functional preinitiation complex with RNA polymerase II and the general transcription factors. Acts closely together with MAB12. Involved in the regulation of embryo patterning and cotyledon organogenesis. May act through transient repression of specific genes such as the ones responsive to auxin. This is Mediator of RNA polymerase II transcription subunit 13 (MED13) from Arabidopsis thaliana (Mouse-ear cress).